The primary structure comprises 383 residues: Aliphatic nitrilase (383 aa).

Residues 13-288 (VKVATVQAEP…EGLLYAELDL (276 aa)) enclose the CN hydrolase domain. Glutamate 53 (proton acceptor) is an active-site residue. Residue lysine 136 is the Proton donor of the active site. Cysteine 170 (nucleophile) is an active-site residue. The interval 359–383 (ATLPLDAPAPAPAPEQKSGRAKAEA) is disordered.

Belongs to the carbon-nitrogen hydrolase superfamily. Nitrilase family.

The enzyme catalyses an aliphatic nitrile + 2 H2O = a carboxylate + NH4(+). In terms of biological role, acts on aliphatic nitriles such as acrylonitrile, crotononitrile and glutaronitrile. The chain is Aliphatic nitrilase from Rhodococcus rhodochrous.